Reading from the N-terminus, the 108-residue chain is UPF0060 membrane protein sll0793 (108 aa).

The next 4 membrane-spanning stretches (helical) occupy residues leucine 7–isoleucine 27, serine 32–leucine 52, tyrosine 64–valine 84, and arginine 86–asparagine 106.

It belongs to the UPF0060 family.

It is found in the cell inner membrane. This Synechocystis sp. (strain ATCC 27184 / PCC 6803 / Kazusa) protein is UPF0060 membrane protein sll0793.